The following is a 214-amino-acid chain: Neurogenin-3 (214 aa).

Polar residues predominate over residues 1-14; sequence MTPQPSGAPTVQVT. Residues 1–98 form a disordered region; the sequence is MTPQPSGAPT…NDRERNRMHN (98 aa). The span at 15-26 shows a compositional bias: basic and acidic residues; that stretch reads RETERSFPRASE. Basic residues-rich tracts occupy residues 57-70 and 79-88; these read APRKLRARRGGRSR and KQRRSRRKKA. Positions 83–135 constitute a bHLH domain; the sequence is SRRKKANDRERNRMHNLNSALDALRGVLPTFPDDAKLTKIETLRFAHNYIWAL.

Efficient DNA binding requires dimerization with another bHLH protein. Interacts with ATOH8.

Its subcellular location is the nucleus. Acts as a transcriptional regulator. Together with NKX2-2, initiates transcriptional activation of NEUROD1. Involved in neurogenesis. Also required for the specification of a common precursor of the 4 pancreatic endocrine cell types. In Homo sapiens (Human), this protein is Neurogenin-3 (NEUROG3).